The primary structure comprises 276 residues: N-alpha-acetyltransferase 60 (276 aa).

The region spanning 34-239 is the N-acetyltransferase domain; the sequence is VQLRFLVPDD…WTLLDHIKHY (206 aa). Tyr59 contributes to the substrate binding site. Tyr139 is an active-site residue. Position 141 (Leu141) interacts with substrate. Acetyl-CoA contacts are provided by residues 143–145 and 151–156; these read LGV and RNGIGS. The active site involves His180. Acetyl-CoA is bound by residues Asn185 and 192 to 195; that span reads YEKR. Positions 204-215 are required for homodimerization; it reads PYYYNIRGKGKD. A substrate-binding site is contributed by Tyr207.

The protein belongs to the acetyltransferase family. NAA60 subfamily.

The enzyme catalyses N-terminal L-methionyl-[transmembrane protein] + acetyl-CoA = N-terminal N(alpha)-acetyl-L-methionyl-[transmembrane protein] + CoA + H(+). It carries out the reaction L-lysyl-[protein] + acetyl-CoA = N(6)-acetyl-L-lysyl-[protein] + CoA + H(+). Functionally, displays alpha (N-terminal) acetyltransferase activity towards a range of N-terminal sequences including those starting with Met-Lys, Met-Val, Met-Ala and Met-Met. Required for normal chromosomal segregation during anaphase. Shows histone acetyltransferase activity toward free histones. In terms of biological role, does not show histone acetyltransferase activity toward free histones. The polypeptide is N-alpha-acetyltransferase 60 (Drosophila melanogaster (Fruit fly)).